The following is a 439-amino-acid chain: Tol-Pal system protein TolB (439 aa).

The first 22 residues, 1 to 22, serve as a signal peptide directing secretion; the sequence is MKKPLRWLAALTVLLLPLSALA.

This sequence belongs to the TolB family. As to quaternary structure, the Tol-Pal system is composed of five core proteins: the inner membrane proteins TolA, TolQ and TolR, the periplasmic protein TolB and the outer membrane protein Pal. They form a network linking the inner and outer membranes and the peptidoglycan layer.

The protein localises to the periplasm. Part of the Tol-Pal system, which plays a role in outer membrane invagination during cell division and is important for maintaining outer membrane integrity. This is Tol-Pal system protein TolB from Xanthomonas oryzae pv. oryzae (strain PXO99A).